A 354-amino-acid polypeptide reads, in one-letter code: GRAM domain-containing protein 2A (354 aa).

The span at Met-1–Val-29 shows a compositional bias: polar residues. The tract at residues Met-1–Leu-46 is disordered. The span at Cys-31–Glu-40 shows a compositional bias: basic and acidic residues. The GRAM domain occupies Gln-72–Lys-139. The chain crosses the membrane as a helical span at residues Leu-312–Phe-332.

Its subcellular location is the endoplasmic reticulum membrane. It localises to the cell membrane. Participates in the organization of endoplasmic reticulum-plasma membrane contact sites (EPCS) with pleiotropic functions including STIM1 recruitment and calcium homeostasis. Constitutive tether that co-localize with ESYT2/3 tethers at endoplasmic reticulum-plasma membrane contact sites in a phosphatidylinositol lipid-dependent manner. Pre-marks the subset of phosphtidylinositol 4,5-biphosphate (PI(4,5)P2)-enriched EPCS destined for the store operated calcium entry pathway (SOCE). The protein is GRAM domain-containing protein 2A of Homo sapiens (Human).